The chain runs to 298 residues: uncharacterized protein (298 aa).

The protein localises to the cytoplasm. Its subcellular location is the nucleus. This is an uncharacterized protein from Schizosaccharomyces pombe (strain 972 / ATCC 24843) (Fission yeast).